A 23-amino-acid chain; its full sequence is Acidic phospholipase A2 CHA-E6b (23 aa).

This sequence belongs to the phospholipase A2 family. Group II subfamily. D49 sub-subfamily. Ca(2+) is required as a cofactor. In terms of processing, contains 7 disulfide bonds. In terms of tissue distribution, expressed by the venom gland.

It is found in the secreted. It catalyses the reaction a 1,2-diacyl-sn-glycero-3-phosphocholine + H2O = a 1-acyl-sn-glycero-3-phosphocholine + a fatty acid + H(+). Snake venom phospholipase A2 (PLA2) that shows high lipolytic (1200 umol/mg/min) and weak ADP-induced platelet aggregation activities. Also shows weak anticoagulant activity (IC(50) of about 1.0 uM). PLA2 catalyzes the calcium-dependent hydrolysis of the 2-acyl groups in 3-sn-phosphoglycerides. This is Acidic phospholipase A2 CHA-E6b from Crotalus horridus (Timber rattlesnake).